Here is a 341-residue protein sequence, read N- to C-terminus: Farnesyl pyrophosphate synthase 2 (341 aa).

3 residues coordinate isopentenyl diphosphate: Lys-46, Arg-49, and Gln-85. Mg(2+)-binding residues include Asp-92 and Asp-96. Dimethylallyl diphosphate is bound at residue Arg-101. Arg-102 serves as a coordination point for isopentenyl diphosphate. 5 residues coordinate dimethylallyl diphosphate: Lys-189, Thr-190, Gln-228, Lys-245, and Lys-254.

It belongs to the FPP/GGPP synthase family. Requires Mg(2+) as cofactor. In terms of tissue distribution, mainly expressed in trichomes, roots and flowers, and, to a lower extent, in leaves and stems.

The protein resides in the cytoplasm. It localises to the nucleus. It catalyses the reaction isopentenyl diphosphate + dimethylallyl diphosphate = (2E)-geranyl diphosphate + diphosphate. It carries out the reaction isopentenyl diphosphate + (2E)-geranyl diphosphate = (2E,6E)-farnesyl diphosphate + diphosphate. It functions in the pathway isoprenoid biosynthesis; farnesyl diphosphate biosynthesis; farnesyl diphosphate from geranyl diphosphate and isopentenyl diphosphate: step 1/1. Its pathway is sesquiterpene biosynthesis. It participates in isoprenoid biosynthesis; geranyl diphosphate biosynthesis; geranyl diphosphate from dimethylallyl diphosphate and isopentenyl diphosphate: step 1/1. Its function is as follows. Catalyzes the sequential condensation of isopentenyl pyrophosphate with the allylic pyrophosphates, dimethylallyl pyrophosphate, and then with the resultant geranylpyrophosphate to the ultimate product farnesyl pyrophosphate. The polypeptide is Farnesyl pyrophosphate synthase 2 (Cannabis sativa (Hemp)).